A 1147-amino-acid chain; its full sequence is ATP-dependent helicase/deoxyribonuclease subunit B (1147 aa).

8–15 (GRAGSGKS) serves as a coordination point for ATP. The [4Fe-4S] cluster site is built by Cys-786, Cys-1106, Cys-1109, and Cys-1115.

It belongs to the helicase family. AddB/RexB type 1 subfamily. Heterodimer of AddA and AddB. It depends on Mg(2+) as a cofactor. [4Fe-4S] cluster serves as cofactor.

Its function is as follows. The heterodimer acts as both an ATP-dependent DNA helicase and an ATP-dependent, dual-direction single-stranded exonuclease. Recognizes the chi site generating a DNA molecule suitable for the initiation of homologous recombination. The AddB subunit has 5' -&gt; 3' nuclease activity but not helicase activity. This Clostridium botulinum (strain Loch Maree / Type A3) protein is ATP-dependent helicase/deoxyribonuclease subunit B.